The primary structure comprises 37 residues: Cytochrome b6-f complex subunit 5 (37 aa).

A helical transmembrane segment spans residues 5–25 (FLFGIVLGLIPITLAGLFVTA).

Belongs to the PetG family. In terms of assembly, the 4 large subunits of the cytochrome b6-f complex are cytochrome b6, subunit IV (17 kDa polypeptide, PetD), cytochrome f and the Rieske protein, while the 4 small subunits are PetG, PetL, PetM and PetN. The complex functions as a dimer.

Its subcellular location is the plastid. It localises to the chloroplast thylakoid membrane. In terms of biological role, component of the cytochrome b6-f complex, which mediates electron transfer between photosystem II (PSII) and photosystem I (PSI), cyclic electron flow around PSI, and state transitions. PetG is required for either the stability or assembly of the cytochrome b6-f complex. This is Cytochrome b6-f complex subunit 5 from Capsella bursa-pastoris (Shepherd's purse).